The sequence spans 228 residues: E3 ubiquitin-protein ligase RNF114 (228 aa).

The RING-type zinc finger occupies 29–68 (CPVCLEVYEKPVQVPCGHVFCSACLQECLKPKKPVCGVCR). Zn(2+) contacts are provided by C91 and C94. The C2HC RNF-type zinc finger occupies 91-110 (CHGCRKNFFLSKIRAHVATC). K102 carries the N6-acetyllysine modification. Residues H106 and C110 each coordinate Zn(2+). Position 112 is an N6-acetyllysine (K112).

Interacts with XAF1, the interaction increases XAF1 stability and proapoptotic effects, and may regulate IFN signaling. Autoubiquitinated. Polyubiquitinated in the presence of E2 enzymes UBE2D1, UBE2D2 and UBE2D3, but only monoubiquitinated in the presence of UBE2E1.

The protein localises to the cytoplasm. The protein resides in the nucleus. The catalysed reaction is S-ubiquitinyl-[E2 ubiquitin-conjugating enzyme]-L-cysteine + [acceptor protein]-L-lysine = [E2 ubiquitin-conjugating enzyme]-L-cysteine + N(6)-ubiquitinyl-[acceptor protein]-L-lysine.. Its pathway is protein modification; protein ubiquitination. Its function is as follows. E3 ubiquitin-protein ligase that promotes the ubiquitination of various substrates. In turn, participates in the regulation of many biological processes including cell cycle, apoptosis, osteoclastogenesis as well as innate or adaptive immunity. Acts as negative regulator of NF-kappa-B-dependent transcription by promoting the ubiquitination and stabilization of the NF-kappa-B inhibitor TNFAIP3. May promote the ubiquitination of TRAF6 as well. Also acts as a negative regulator of T-cell activation. Inhibits cellular dsRNA responses and interferon production by targeting MAVS component for proteasomal degradation. Ubiquitinates the CDK inhibitor CDKN1A leading to its degradationand probably also CDKN1B and CDKN1C. This activity stimulates cell cycle G1-to-S phase transition and suppresses cellular senescence. May play a role in spermatogenesis. Inhibits classical swine fever virus replication by mediating 'K27'-linked ubiquitination of viral NS4B and inducing its degradation via the proteasome. In Sus scrofa (Pig), this protein is E3 ubiquitin-protein ligase RNF114 (RNF114).